The following is a 230-amino-acid chain: 5'-methylthioadenosine/S-adenosylhomocysteine nucleosidase (230 aa).

Catalysis depends on glutamate 12, which acts as the Proton acceptor. Substrate-binding positions include glycine 78, isoleucine 153, and 174-175; that span reads ME. The Proton donor role is filled by aspartate 198.

It belongs to the PNP/UDP phosphorylase family. MtnN subfamily.

The catalysed reaction is S-adenosyl-L-homocysteine + H2O = S-(5-deoxy-D-ribos-5-yl)-L-homocysteine + adenine. The enzyme catalyses S-methyl-5'-thioadenosine + H2O = 5-(methylsulfanyl)-D-ribose + adenine. It catalyses the reaction 5'-deoxyadenosine + H2O = 5-deoxy-D-ribose + adenine. The protein operates within amino-acid biosynthesis; L-methionine biosynthesis via salvage pathway; S-methyl-5-thio-alpha-D-ribose 1-phosphate from S-methyl-5'-thioadenosine (hydrolase route): step 1/2. Catalyzes the irreversible cleavage of the glycosidic bond in both 5'-methylthioadenosine (MTA) and S-adenosylhomocysteine (SAH/AdoHcy) to adenine and the corresponding thioribose, 5'-methylthioribose and S-ribosylhomocysteine, respectively. Also cleaves 5'-deoxyadenosine, a toxic by-product of radical S-adenosylmethionine (SAM) enzymes, into 5-deoxyribose and adenine. The chain is 5'-methylthioadenosine/S-adenosylhomocysteine nucleosidase from Shewanella sediminis (strain HAW-EB3).